We begin with the raw amino-acid sequence, 235 residues long: Carboxymethylenebutenolidase 2 (235 aa).

Residues Cys-117, Asp-173, and His-204 contribute to the active site.

This sequence belongs to the dienelactone hydrolase family. Monomer.

The enzyme catalyses 2-(5-oxo-2,5-dihydrofuran-2-ylidene)acetate + H2O = 4-oxohex-2-enedioate + H(+). The protein operates within aromatic compound metabolism; 3-chlorocatechol degradation. Its function is as follows. Ring cleavage of cyclic ester dienelactone to produce maleylacetate. The polypeptide is Carboxymethylenebutenolidase 2 (tfdEII) (Cupriavidus pinatubonensis (strain JMP 134 / LMG 1197) (Cupriavidus necator (strain JMP 134))).